Consider the following 561-residue polypeptide: Asparagine synthetase [glutamine-hydrolyzing] (561 aa).

Cys-2 serves as the catalytic For GATase activity. Residues 2–191 (CGIWALFGSD…PGHYEVLDLK (190 aa)) enclose the Glutamine amidotransferase type-2 domain. L-glutamine contacts are provided by residues 49–53 (RLAVV), 75–77 (NGE), and Asp-97. The Asparagine synthetase domain occupies 213–536 (HALYDGVEKL…PGRADWLPHY (324 aa)). ATP contacts are provided by residues Leu-256, Ile-288, and 363-364 (SG). Lys-385 is modified (N6-acetyllysine). Position 545 is a phosphothreonine (Thr-545).

The enzyme catalyses L-aspartate + L-glutamine + ATP + H2O = L-asparagine + L-glutamate + AMP + diphosphate + H(+). The protein operates within amino-acid biosynthesis; L-asparagine biosynthesis; L-asparagine from L-aspartate (L-Gln route): step 1/1. The polypeptide is Asparagine synthetase [glutamine-hydrolyzing] (ASNS) (Bos taurus (Bovine)).